A 400-amino-acid chain; its full sequence is Tryptophan synthase beta chain (400 aa).

Position 95 is an N6-(pyridoxal phosphate)lysine (K95).

Belongs to the TrpB family. Tetramer of two alpha and two beta chains. Pyridoxal 5'-phosphate is required as a cofactor.

It catalyses the reaction (1S,2R)-1-C-(indol-3-yl)glycerol 3-phosphate + L-serine = D-glyceraldehyde 3-phosphate + L-tryptophan + H2O. It functions in the pathway amino-acid biosynthesis; L-tryptophan biosynthesis; L-tryptophan from chorismate: step 5/5. Its function is as follows. The beta subunit is responsible for the synthesis of L-tryptophan from indole and L-serine. The polypeptide is Tryptophan synthase beta chain (Chlorobaculum tepidum (strain ATCC 49652 / DSM 12025 / NBRC 103806 / TLS) (Chlorobium tepidum)).